Here is a 205-residue protein sequence, read N- to C-terminus: DNA-directed RNA polymerase RPB5 homolog (205 aa).

It belongs to the archaeal RpoH/eukaryotic RPB5 RNA polymerase subunit family. In terms of assembly, part of the viral DNA-directed RNA polymerase that consists of 8 polII-like subunits (RPB1, RPB2, RPB3, RPB5, RPB6, RPB7, RPB9, RPB10), a capping enzyme and a termination factor.

Its subcellular location is the host cytoplasm. It is found in the virion. In terms of biological role, component of the DNA-directed RNA polymerase (RNAP) that catalyzes the transcription in the cytoplasm of viral DNA into RNA using the four ribonucleoside triphosphates as substrates. The sequence is that of DNA-directed RNA polymerase RPB5 homolog from Ornithodoros (relapsing fever ticks).